A 2013-amino-acid polypeptide reads, in one-letter code: Centrosomal protein 224 (2013 aa).

HEAT repeat units follow at residues Thr-115–Thr-153, Gln-158–Lys-196, Pro-200–Lys-238, Thr-348–Ser-386, and Thr-427–Glu-465. Positions Pro-512–Asn-557 are disordered. A compositionally biased stretch (low complexity) spans Thr-524–Ser-543. HEAT repeat units lie at residues Ile-724–Ala-762, Val-816–Arg-854, Gln-857–Gly-895, Glu-899–Gly-937, and Pro-977–Leu-1015. The interval Lys-1043 to Gln-1109 is disordered. Residues Lys-1053–Ser-1106 show a composition bias toward low complexity. HEAT repeat units follow at residues Glu-1240–Pro-1279, Val-1281–Ala-1314, and Cys-1317–Asp-1353. Low complexity-rich tracts occupy residues Asn-1372–Gln-1406, Asn-1695–Ser-1735, and Ser-1746–Thr-1796. Disordered regions lie at residues Asn-1372–Thr-1413, Asn-1695–Lys-1809, Asn-1905–Gln-1949, and Thr-1966–Ser-1995. The segment covering Ile-1799 to Lys-1809 has biased composition (basic and acidic residues). A compositionally biased stretch (low complexity) spans Asn-1913–Asn-1939. A compositionally biased stretch (polar residues) spans Ser-1940 to Gln-1949. A compositionally biased stretch (low complexity) spans Leu-1967–Ser-1995.

Belongs to the TOG/XMAP215 family. Interacts with eb1 at the microtubule tip, centrosome and kinetochore. Interacts with lis1 in the cortical attachment of microtubules.

It localises to the cytoplasm. It is found in the cytoskeleton. The protein localises to the microtubule organizing center. The protein resides in the centrosome. Its subcellular location is the chromosome. It localises to the centromere. It is found in the kinetochore. Functionally, involved in regulation of microtubule dynamics. Regulates the interaction of microtubules tips with the centrosome and cell cortex. The sequence is that of Centrosomal protein 224 (mtaA) from Dictyostelium discoideum (Social amoeba).